We begin with the raw amino-acid sequence, 317 residues long: MNIESQSSVSEKFSPFLTFTRKQWAELRKSVPLKLTEQDLKPLLGFNEELSLEEVSTIYLPLARLINYYIEENLRRQTVMNRFLGNTNANVPYIISIAGSVSVGKSTSARILQSLLSNWPENRKVDLITTDGFLYPLEKLKKENLLHKKGFPVSYDTPKLIKFLADVKSGKPNVSAPIYSHLTYDIIPDKFNKVDRPDILILEGLNVLQTGSRKAEQTFVSDFVDFSVYVDADEALLKEWYIRRFLKFRESAFTDPNSYFKDYAKLSKEEAVETAANIWNTINGLNLRQNILPTRERANLILRKGADHAVQEVKLRK.

Residue 99–106 (GSVSVGKS) participates in ATP binding.

The protein belongs to the prokaryotic pantothenate kinase family.

Its subcellular location is the cytoplasm. The catalysed reaction is (R)-pantothenate + ATP = (R)-4'-phosphopantothenate + ADP + H(+). Its pathway is cofactor biosynthesis; coenzyme A biosynthesis; CoA from (R)-pantothenate: step 1/5. This Mannheimia succiniciproducens (strain KCTC 0769BP / MBEL55E) protein is Pantothenate kinase.